Reading from the N-terminus, the 161-residue chain is Protein-export protein SecB (161 aa).

It belongs to the SecB family. Homotetramer, a dimer of dimers. One homotetramer interacts with 1 SecA dimer.

The protein resides in the cytoplasm. Its function is as follows. One of the proteins required for the normal export of preproteins out of the cell cytoplasm. It is a molecular chaperone that binds to a subset of precursor proteins, maintaining them in a translocation-competent state. It also specifically binds to its receptor SecA. The sequence is that of Protein-export protein SecB from Shewanella baltica (strain OS223).